The chain runs to 557 residues: Formate--tetrahydrofolate ligase (557 aa).

66-73 provides a ligand contact to ATP; that stretch reads TPAGEGKS.

This sequence belongs to the formate--tetrahydrofolate ligase family.

It catalyses the reaction (6S)-5,6,7,8-tetrahydrofolate + formate + ATP = (6R)-10-formyltetrahydrofolate + ADP + phosphate. The protein operates within one-carbon metabolism; tetrahydrofolate interconversion. The chain is Formate--tetrahydrofolate ligase from Clostridium botulinum (strain Kyoto / Type A2).